Consider the following 682-residue polypeptide: Glutamine--fructose-6-phosphate aminotransferase [isomerizing] 2 (682 aa).

The For GATase activity role is filled by Cys-2. One can recognise a Glutamine amidotransferase type-2 domain in the interval 2 to 288 (CGIFAYMNYR…DDDIAAVADG (287 aa)). Ser-244 is subject to Phosphoserine. SIS domains are found at residues 360–499 (HLKE…DRIS) and 531–672 (LALE…VDFP). Residues 377 to 378 (TS), 422 to 424 (SQS), Thr-427, and His-578 contribute to the substrate site.

It carries out the reaction D-fructose 6-phosphate + L-glutamine = D-glucosamine 6-phosphate + L-glutamate. It participates in nucleotide-sugar biosynthesis; UDP-N-acetyl-alpha-D-glucosamine biosynthesis; alpha-D-glucosamine 6-phosphate from D-fructose 6-phosphate: step 1/1. Its function is as follows. Controls the flux of glucose into the hexosamine pathway. Most likely involved in regulating the availability of precursors for N- and O-linked glycosylation of proteins. The chain is Glutamine--fructose-6-phosphate aminotransferase [isomerizing] 2 (GFPT2) from Bos taurus (Bovine).